A 1080-amino-acid chain; its full sequence is MLKRLLSKLTGNRQQIEHHLKNQYQVEENGLSFPLSLVDDSQLWALASWLEQLAEEDYLISLTDRWLLSWDALYRLLEDEEHASSLPLIGVPDVLPLRASLSSRGALSDSDFRVWIAEWATLPARKPIRFSRTGAILTHENQQYLLSRENWALLQATEQLSAQKNQTPGETTNQLGWAAIRKCAKQAAAKFDDYLEKTHVVKPTSLSLRLRKATVADTAVIEIEPHFEDQPANWLGSFDKNSQVHDSYRIPGENGELSHVIIPPEVKEVLNSIHSIPSRRVAGSEALSFVRNPYTFLGEDAASVIAPEEHEQALFDARIFFHHFRLIPQLNAENKIAEVTLVLEPVSPVPQPEITFGFSAPRELDKFIQQLGISVAAQMPAGSWQGYELELSQFTEQQWHDCQALLTRWQQEIEGKEFSDVLDIAKYGDRVIGIGEFEKISSPWLTKAQSENWLPDDIDFSAFSVETLSGWQPENLHHFDELQERITQAEAVGETHITAPWNDSQLPLDAAKTFSKNWEKQQSTANESQGNVADKTARAVLKIEQNIEETAYIKQRRNSLLNARHAEPEIPLSLKEHIRLKDHQREGVAWLQQLFLRSPEETAGCLLADDMGLGKTLQILSFLVWFIEKFPQEPPSLIVAPVSLLDNWERELDNFFYTAGIPVLKLYGETIKAVKYPKQAIPAHLQSQGIKNLLKPGWQGEAKIILTTYETLRDQEFSLARQPWSIMVCDEAQKIKNPAALITHAANAVQARFKVACTGTPVENTLVDLWSLFDFAQPGLLGALNEFGKHYVRPIENEDGRDTERLESLRALIEPQTLRRTKEEVARDLPQKIEVESCKQLTLSGVQKQLYLSSVANWQQQQALSEGMQQAGTGMLGLLHRLKLICAHPAVVNPEPRFRDNSPKLNWLLKILAELKHTTKDKVIIFTELRDLQRELQHAIHQKFGFRPVIINGDTSTKSQSQNSRQRLIDDFQAQPGFGVIILSTVAVGFGVNVQKANHVIHFTRCWNPAKEDQATDRAYRIGQTKDVYVYYPTVKDTEITTFEETLDDLLQRRRALARDMLCATPDLSGADFEAILKGA.

Positions 596–779 (LRSPEETAGC…WSLFDFAQPG (184 aa)) constitute a Helicase ATP-binding domain. The Helicase C-terminal domain occupies 904–1069 (KLNWLLKILA…DMLCATPDLS (166 aa)).

Functionally, component of antiviral defense system Zorya type I, composed of ZorA, ZorB, ZorC and ZorD. Expression of Zorya type I in E.coli (strain MG1655) confers 10,000-fold resistance to phage SECphi27, 100-fold resistance to lambda, and 10-fold resistance to T7. While most T7 infected Zorya-containing cells undergo abortive infection, a minority produce viable phage progeny. These eventually accumulate to a high multiplicity of infection, leading to culture collapse by 2 hours after initial infection. ZorA and ZorB probably assemble in the cell inner membrane and exert their effect there. This may have ATPase activity. In Escherichia coli O139:H28 (strain E24377A / ETEC), this protein is Zorya protein ZorD.